The following is a 78-amino-acid chain: Acyl carrier protein (78 aa).

A Carrier domain is found at methionine 1–glutamine 76. Residue serine 36 is modified to O-(pantetheine 4'-phosphoryl)serine.

The protein belongs to the acyl carrier protein (ACP) family. Post-translationally, 4'-phosphopantetheine is transferred from CoA to a specific serine of apo-ACP by AcpS. This modification is essential for activity because fatty acids are bound in thioester linkage to the sulfhydryl of the prosthetic group.

The protein localises to the cytoplasm. It functions in the pathway lipid metabolism; fatty acid biosynthesis. Its function is as follows. Carrier of the growing fatty acid chain in fatty acid biosynthesis. The sequence is that of Acyl carrier protein from Chlamydia felis (strain Fe/C-56) (Chlamydophila felis).